The following is a 414-amino-acid chain: Gamma-glutamyl phosphate reductase (414 aa).

This sequence belongs to the gamma-glutamyl phosphate reductase family.

It localises to the cytoplasm. The enzyme catalyses L-glutamate 5-semialdehyde + phosphate + NADP(+) = L-glutamyl 5-phosphate + NADPH + H(+). Its pathway is amino-acid biosynthesis; L-proline biosynthesis; L-glutamate 5-semialdehyde from L-glutamate: step 2/2. In terms of biological role, catalyzes the NADPH-dependent reduction of L-glutamate 5-phosphate into L-glutamate 5-semialdehyde and phosphate. The product spontaneously undergoes cyclization to form 1-pyrroline-5-carboxylate. This chain is Gamma-glutamyl phosphate reductase, found in Thermoanaerobacter pseudethanolicus (strain ATCC 33223 / 39E) (Clostridium thermohydrosulfuricum).